We begin with the raw amino-acid sequence, 308 residues long: Ribosomal RNA small subunit methyltransferase H (308 aa).

Residues 38-40, Asp-58, Phe-82, Asp-99, and Gln-106 each bind S-adenosyl-L-methionine; that span reads GGH.

It belongs to the methyltransferase superfamily. RsmH family.

The protein resides in the cytoplasm. The enzyme catalyses cytidine(1402) in 16S rRNA + S-adenosyl-L-methionine = N(4)-methylcytidine(1402) in 16S rRNA + S-adenosyl-L-homocysteine + H(+). Functionally, specifically methylates the N4 position of cytidine in position 1402 (C1402) of 16S rRNA. This chain is Ribosomal RNA small subunit methyltransferase H, found in Acidovorax sp. (strain JS42).